We begin with the raw amino-acid sequence, 230 residues long: 2,3-bisphosphoglycerate-dependent phosphoglycerate mutase (230 aa).

Residues 8 to 15 (RHGESEWN), 21 to 22 (TG), arginine 60, 87 to 90 (ERHY), lysine 98, 114 to 115 (RR), and 183 to 184 (GN) contribute to the substrate site. The active-site Tele-phosphohistidine intermediate is histidine 9. The active-site Proton donor/acceptor is glutamate 87.

Belongs to the phosphoglycerate mutase family. BPG-dependent PGAM subfamily.

It carries out the reaction (2R)-2-phosphoglycerate = (2R)-3-phosphoglycerate. It functions in the pathway carbohydrate degradation; glycolysis; pyruvate from D-glyceraldehyde 3-phosphate: step 3/5. Catalyzes the interconversion of 2-phosphoglycerate and 3-phosphoglycerate. The polypeptide is 2,3-bisphosphoglycerate-dependent phosphoglycerate mutase (Streptococcus mutans serotype c (strain ATCC 700610 / UA159)).